Consider the following 115-residue polypeptide: Large ribosomal subunit protein bL19 (115 aa).

It belongs to the bacterial ribosomal protein bL19 family.

Functionally, this protein is located at the 30S-50S ribosomal subunit interface and may play a role in the structure and function of the aminoacyl-tRNA binding site. The chain is Large ribosomal subunit protein bL19 from Buchnera aphidicola subsp. Schizaphis graminum (strain Sg).